Reading from the N-terminus, the 620-residue chain is Long-chain fatty acid transport protein 2 (620 aa).

Over M1–A4 the chain is Lumenal. The chain crosses the membrane as a helical span at residues I5–F27. Topologically, residues Q28–C106 are cytoplasmic. The helical transmembrane segment at V107 to L127 threads the bilayer. The Lumenal segment spans residues G128–Y261. Y222–K233 serves as a coordination point for AMP. Residues I262 to A282 form a helical membrane-spanning segment. Residues G283 to L620 are Cytoplasmic-facing. N6-acetyllysine is present on K291. Position 577 is a phosphothreonine (T577).

Belongs to the ATP-dependent AMP-binding enzyme family. As to expression, expressed in liver, kidney, placenta, intestine, brain, heart, and colon. Predominantly expressed in liver. Expressed in liver, placenta, and intestine, but much lower relative to isoform 1.

The protein localises to the endoplasmic reticulum membrane. Its subcellular location is the peroxisome membrane. The protein resides in the cell membrane. It is found in the microsome. The catalysed reaction is a fatty acid(in) = a fatty acid(out). It catalyses the reaction (9Z)-octadecenoate(out) = (9Z)-octadecenoate(in). It carries out the reaction a long-chain fatty acid + ATP + CoA = a long-chain fatty acyl-CoA + AMP + diphosphate. The enzyme catalyses (5Z,8Z,11Z,14Z)-eicosatetraenoate + ATP + CoA = (5Z,8Z,11Z,14Z)-eicosatetraenoyl-CoA + AMP + diphosphate. The catalysed reaction is hexadecanoate + ATP + CoA = hexadecanoyl-CoA + AMP + diphosphate. It catalyses the reaction (9Z)-octadecenoate + ATP + CoA = (9Z)-octadecenoyl-CoA + AMP + diphosphate. It carries out the reaction 3,7,11,15-tetramethylhexadecanoate + ATP + CoA = phytanoyl-CoA + AMP + diphosphate. The enzyme catalyses (9Z,12Z,15Z)-octadecatrienoate + ATP + CoA = (9Z,12Z,15Z)-octadecatrienoyl-CoA + AMP + diphosphate. The catalysed reaction is 2,6,10,14-tetramethylpentadecanoate + ATP + CoA = pristanoyl-CoA + AMP + diphosphate. It catalyses the reaction (E)-hexadec-2-enoate + ATP + CoA = (2E)-hexadecenoyl-CoA + AMP + diphosphate. It carries out the reaction a very long-chain fatty acid + ATP + CoA = a very long-chain fatty acyl-CoA + AMP + diphosphate. The enzyme catalyses tetracosanoate + ATP + CoA = tetracosanoyl-CoA + AMP + diphosphate. The catalysed reaction is (4Z,7Z,10Z,13Z,16Z,19Z)-docosahexaenoate + ATP + CoA = (4Z,7Z,10Z,13Z,16Z,19Z)-docosahexaenoyl-CoA + AMP + diphosphate. It catalyses the reaction (25R)-3alpha,7alpha,12alpha-trihydroxy-5beta-cholestan-26-oate + ATP + CoA = (25R)-3alpha,7alpha,12alpha-trihydroxy-5beta-cholestan-26-oyl-CoA + AMP + diphosphate. Its function is as follows. Mediates the import of long-chain fatty acids (LCFA) into the cell by facilitating their transport across cell membranes, playing an important role in hepatic fatty acid uptake. Also functions as an acyl-CoA ligase catalyzing the ATP-dependent formation of fatty acyl-CoA using LCFA and very-long-chain fatty acids (VLCFA) as substrates, which prevents fatty acid efflux from cells and might drive more fatty acid uptake. Plays a pivotal role in regulating available LCFA substrates from exogenous sources in tissues undergoing high levels of beta-oxidation or triglyceride synthesis. Can also activate branched-chain fatty acids such as phytanic acid and pristanic acid. May contribute to the synthesis of sphingosine-1-phosphate. Does not activate C24 bile acids, cholate and chenodeoxycholate. In vitro, activates 3-alpha,7-alpha,12-alpha-trihydroxy-5-beta-cholestanate (THCA), the C27 precursor of cholic acid deriving from the de novo synthesis from cholesterol. However, it is not critical for THCA activation and bile synthesis in vivo. Functionally, exhibits both long-chain fatty acids (LCFA) transport activity and acyl CoA synthetase towards very long-chain fatty acids. Shows a preference for generating CoA derivatives of n-3 fatty acids, which are preferentially trafficked into phosphatidylinositol. Exhibits long-chain fatty acids (LCFA) transport activity but lacks acyl CoA synthetase towards very long-chain fatty acids. This Homo sapiens (Human) protein is Long-chain fatty acid transport protein 2 (SLC27A2).